Here is a 432-residue protein sequence, read N- to C-terminus: Glutamyl-tRNA reductase (432 aa).

Substrate-binding positions include 50 to 53 (TCNR), serine 110, 115 to 117 (ETQ), and glutamine 121. The active-site Nucleophile is the cysteine 51. 190 to 195 (GAGEMS) lines the NADP(+) pocket.

Belongs to the glutamyl-tRNA reductase family. In terms of assembly, homodimer.

The catalysed reaction is (S)-4-amino-5-oxopentanoate + tRNA(Glu) + NADP(+) = L-glutamyl-tRNA(Glu) + NADPH + H(+). It functions in the pathway porphyrin-containing compound metabolism; protoporphyrin-IX biosynthesis; 5-aminolevulinate from L-glutamyl-tRNA(Glu): step 1/2. In terms of biological role, catalyzes the NADPH-dependent reduction of glutamyl-tRNA(Glu) to glutamate 1-semialdehyde (GSA). The chain is Glutamyl-tRNA reductase from Aliarcobacter butzleri (strain RM4018) (Arcobacter butzleri).